The chain runs to 1494 residues: ABC multidrug transporter atrG (1494 aa).

Over residues 1 to 11 (MSLLGTINPNL) the composition is skewed to polar residues. 2 disordered regions span residues 1–48 (MSLL…RTSD) and 84–105 (FSVS…TLNP). Asn-41 is a glycosylation site (N-linked (GlcNAc...) asparagine). Asn-141 and Asn-340 each carry an N-linked (GlcNAc...) asparagine glycan. In terms of domain architecture, ABC transporter 1 spans 162–416 (LQVGALFRAV…FTTMGFECPE (255 aa)). Helical transmembrane passes span 527–547 (LTMS…SVFY) and 561–581 (ALLF…ILTL). Residue Asn-622 is glycosylated (N-linked (GlcNAc...) asparagine). The next 3 helical transmembrane spans lie at 636–656 (GPFF…SMLF), 669–689 (ALVP…FTIP), and 778–798 (GIMF…TEYI). Asn-835 carries an N-linked (GlcNAc...) asparagine glycan. One can recognise an ABC transporter 2 domain in the interval 852–1095 (FHWQDVCYDI…LASYFERNGA (244 aa)). 888–895 (GVSGAGKT) contacts ATP. 5 consecutive transmembrane segments (helical) span residues 1191 to 1211 (YIYS…FSFF), 1227 to 1247 (IFML…NFVT), 1276 to 1296 (LPWN…PIGL), 1312 to 1332 (LMWL…HMMI), and 1351 to 1371 (LCLI…FWIF). 2 N-linked (GlcNAc...) asparagine glycosylation sites follow: Asn-1410 and Asn-1432. Residues 1463 to 1483 (FGIMWAFIVFNIAAAVFIYWL) traverse the membrane as a helical segment.

This sequence belongs to the ABC transporter superfamily. ABCG family. PDR (TC 3.A.1.205) subfamily.

The protein localises to the cell membrane. It carries out the reaction (R)-miconazole(in) + ATP + H2O = (R)-miconazole(out) + ADP + phosphate + H(+). Functionally, pleiotropic ABC efflux transporter involved in the basal level of azole susceptibility. Confers resistance to miconazole and clotrimazole. This Aspergillus oryzae (strain ATCC 42149 / RIB 40) (Yellow koji mold) protein is ABC multidrug transporter atrG.